A 1720-amino-acid polypeptide reads, in one-letter code: Merozoite surface protein 1 (1720 aa).

The N-terminal stretch at 1 to 19 is a signal peptide; that stretch reads MKIIFFLCSFLFFIINTQC. A compositionally biased stretch (low complexity) spans 63-112; that stretch reads ASAQSGASAQSGASAQSGASAQSGASAQSGASAQSGTSGPSGPSGTSPSS. Positions 63–137 are disordered; that stretch reads ASAQSGASAQ…PPADASDSDA (75 aa). Residues 113–122 show a composition bias toward polar residues; that stretch reads RSNTLPRSNT. Residues 123-132 are compositionally biased toward low complexity; the sequence is SSGASPPADA. Residues 474 to 519 are a coiled coil; the sequence is INNIKKKIDLEEKNINHTKEQNKKLLEDYEKSKKDYEELLEKFYEM. Disordered regions lie at residues 723–775, 908–955, 1249–1278, and 1470–1491; these read SETT…PPKE, TGTS…SGPA, TPPQ…TQIP, and KEKF…DEQK. Over residues 743-753 the composition is skewed to acidic residues; sequence EVTEETEETEE. Positions 908 to 946 are enriched in low complexity; the sequence is TGTSSTSSPGNTTVNTAQSATHSNSQNQQSNASSTNTQN. Residues 1264–1278 are compositionally biased toward polar residues; that stretch reads VSGSSGSTKEETQIP. Positions 1475 to 1484 are enriched in pro residues; that stretch reads SSPPTTPPSP. 2 EGF-like domains span residues 1611–1651 and 1652–1693; these read HQCV…VENP and NPTC…YPLF. 6 disulfide bridges follow: Cys-1613–Cys-1624, Cys-1618–Cys-1634, Cys-1636–Cys-1647, Cys-1655–Cys-1668, Cys-1662–Cys-1682, and Cys-1684–Cys-1698. The GPI-anchor amidated serine moiety is linked to residue Ser-1699. Residues 1700–1720 constitute a propeptide, removed in mature form; sequence SSNFLGISFLLILMLILYSFI.

As to quaternary structure, forms a complex composed of subunits p83, p30, p38, and p42 which remain non-covalently associated; the complex is formed at the merozoite surface prior to egress from host erythrocytes. Forms a complex composed of processed MSP1 subunits, MSP6 subunit p36 and MSP7; the complex is formed at the merozoite surface prior to egress from host erythrocytes. Within the complex, interacts (via subunit p38) with MSP6 subunit p36 and (via subunits p83, p30 and p38) with MSP7 (via subunit p22). Forms a complex composed of MSP1, MSP6, DBLMSP1 and DBLMSP2. Within the complex, interacts (via subunit p38) with DBLMSP1 and DBLMSP2. Forms a complex composed of MSP1, and rhoptry proteins RhopH3, RAP1 and CLAG9/RhopH3. Within the complex, interacts (via subunits p42 and p19) with RhopH3 (via C-terminus). Forms a complex composed of MSP1, MSP6, MSP7, MSP9 and MSP3; within the complex, MSP6 and MSP9 mediate the binding to the host erythrocyte. Interacts (via subunits p19 and p42) with MSP9; the interaction is direct; MSP1 subunits p19 or p42, and MSP9 form a co-ligand complex that interacts with host SLC4A1/Band 3 protein. May interact with PFD6. Interacts with host spectrin. In terms of assembly, interacts with host glycophorin GYPA in a sialic acid-independent manner. Interacts with host proinflammatory cytokine S100P; the interaction blocks S100P inflammatory and chemotactic activities. As to quaternary structure, interacts with host SLC4A1/Band 3 (via 5ABC region) on the host erythrocyte surface in a sialic acid-independent manner. In terms of processing, the p190 precursor is cleaved by SUB1 prior to merozoite egress into 4 subunits p83, p30, p38, and p42 which remain non-covalently associated. SUB1-mediated proteolytic cleavage occurs in an orderly manner; the first cleavage occurs at the p30/p38 site, followed by cleavage at the p83/p30 site, in the 3D7 strain a second cleavage occurs at the N-terminus of p83, the last cleavage occurs at the p38/p42 site. The order of cleavage is essential for parasite viability. SUB1-mediated processing is essential for merozoite egress. In a second processing step during erythrocyte invasion, p42 is cleaved by SUB2 into p33 and p19; the latter remains attached to the merozoite surface via its GPI-anchor and is endocytosed during the subsequent ring stage.

The protein localises to the cell membrane. It localises to the secreted. It is found in the vacuole membrane. Functionally, during the asexual blood stage, involved in merozoite egress from host erythrocytes possibly via its interaction with the host cytoskeleton protein spectrin resulting in the destabilization of the host cytoskeleton and thus leading to erythrocyte cell membrane rupture. Involved in the binding to host erythrocytes and is required for host erythrocyte invasion. In terms of biological role, by binding to host proinflammatory cytokine S100P may interfere with host immune responses. Involved in merozoite invasion of host erythrocytes. May play a role in the biogenesis and/or function of the food vacuole during the intraerythrocytic development. The sequence is that of Merozoite surface protein 1 from Plasmodium falciparum (isolate 3D7).